Reading from the N-terminus, the 180-residue chain is Probable chorismate pyruvate-lyase (180 aa).

Substrate-binding residues include R73, L111, and E170.

Belongs to the UbiC family.

It localises to the cytoplasm. The catalysed reaction is chorismate = 4-hydroxybenzoate + pyruvate. It functions in the pathway cofactor biosynthesis; ubiquinone biosynthesis. Functionally, removes the pyruvyl group from chorismate, with concomitant aromatization of the ring, to provide 4-hydroxybenzoate (4HB) for the ubiquinone pathway. This is Probable chorismate pyruvate-lyase from Nitrosospira multiformis (strain ATCC 25196 / NCIMB 11849 / C 71).